The chain runs to 69 residues: Ribosome modulation factor (69 aa).

It belongs to the ribosome modulation factor family.

Its subcellular location is the cytoplasm. During stationary phase, converts 70S ribosomes to an inactive dimeric form (100S ribosomes). The protein is Ribosome modulation factor of Chromohalobacter salexigens (strain ATCC BAA-138 / DSM 3043 / CIP 106854 / NCIMB 13768 / 1H11).